The primary structure comprises 981 residues: GPI ethanolamine phosphate transferase 1 (981 aa).

Topologically, residues 1-6 are cytoplasmic; it reads MAGSSR. The helical transmembrane segment at 7–27 threads the bilayer; it reads IGFMAIAVAFHLVYILSIFDI. Over 28-464 the chain is Lumenal; that stretch reads YFVSPIVTGM…LQTYDWLFLR (437 aa). Residues Asn148, Asn211, and Asn295 are each glycosylated (N-linked (GlcNAc...) asparagine). A helical membrane pass occupies residues 465–485; it reads ALITIGYLGWMAYATTTVLSL. Residues 486–496 are Cytoplasmic-facing; that stretch reads YVVKESMSPQR. Residues 497–517 traverse the membrane as a helical segment; sequence TLLGSAFFLSLLVALYSSFII. The Lumenal segment spans residues 518–519; that stretch reads SK. The helical transmembrane segment at 520 to 540 threads the bilayer; sequence SPPAYYLYAFFPVLFWEEVYA. The Cytoplasmic segment spans residues 541-560; it reads RRANVAKGFQALFGHVKSGG. A helical transmembrane segment spans residues 561–581; sequence AVVALVFNVVLYLGVIQSLAL. The Lumenal segment spans residues 582 to 587; it reads AYIHRE. A helical transmembrane segment spans residues 588-608; it reads ILTGLFVLGAFWPMTQGISFL. At 609–611 the chain is on the cytoplasmic side; it reads RSH. The helical transmembrane segment at 612-632 threads the bilayer; the sequence is LFLSMLWFFSCLAMSTFTLLP. Residues 633–638 lie on the Lumenal side of the membrane; it reads AMKVED. Residues 639–659 form a helical membrane-spanning segment; the sequence is IPLIMAGGGLMTFVGLAYLVL. At 660 to 681 the chain is on the cytoplasmic side; it reads EDFILSDVSSSKTKLKRLHTSR. A helical membrane pass occupies residues 682–702; the sequence is TLLGIQVGLIILAMLVTHSSA. Over 703 to 708 the chain is Lumenal; that stretch reads TSLQAK. A helical membrane pass occupies residues 709–729; sequence LGLPKGNQIVGWFVLVTSLLM. The Cytoplasmic segment spans residues 730–744; sequence PLAYRLQPNSHYMHR. Residues 745 to 767 traverse the membrane as a helical segment; it reads LAIIFLTCAPTFVILTISYEGLF. Topologically, residues 768–819 are lumenal; the sequence is YVAFSITLLSWVRLEYAVDAFTQEKAKKQATVAGSQQHTPSTFRPLSLSDAR. The chain crosses the membrane as a helical span at residues 820–840; sequence IALFFMVLLQSAFFSTGNIAS. At 841–862 the chain is on the cytoplasmic side; it reads ISSFSLESVSRLIPVFDPFSQG. Residues 863–883 form a helical membrane-spanning segment; it reads ALLILKIIIPFFLISANLGVL. Topologically, residues 884–892 are lumenal; the sequence is NKRLGVAPS. The helical transmembrane segment at 893–913 threads the bilayer; that stretch reads AIFMVVLTASDVLTLYFFWVV. Residues 914–929 are Cytoplasmic-facing; that stretch reads KDEGSWLEIGSTITHF. Residues 930 to 950 traverse the membrane as a helical segment; that stretch reads AIASFLCVFVAALEFVSAAFI. At 951–981 the chain is on the lumenal side; the sequence is AGIEVEDTKSAALTSASTKADEKVPPVAGAE.

The protein belongs to the PIGG/PIGN/PIGO family. PIGN subfamily.

It is found in the endoplasmic reticulum membrane. It functions in the pathway glycolipid biosynthesis; glycosylphosphatidylinositol-anchor biosynthesis. Its function is as follows. Ethanolamine phosphate transferase involved in glycosylphosphatidylinositol-anchor biosynthesis. Transfers ethanolamine phosphate to the first alpha-1,4-linked mannose of the glycosylphosphatidylinositol precursor of GPI-anchor. This chain is GPI ethanolamine phosphate transferase 1 (MCD4), found in Gibberella zeae (strain ATCC MYA-4620 / CBS 123657 / FGSC 9075 / NRRL 31084 / PH-1) (Wheat head blight fungus).